The chain runs to 285 residues: Nucleotide-binding protein PFL_0912 (285 aa).

8–15 (GRSGSGKS) serves as a coordination point for ATP. 60–63 (DARN) lines the GTP pocket.

This sequence belongs to the RapZ-like family.

In terms of biological role, displays ATPase and GTPase activities. The protein is Nucleotide-binding protein PFL_0912 of Pseudomonas fluorescens (strain ATCC BAA-477 / NRRL B-23932 / Pf-5).